A 314-amino-acid polypeptide reads, in one-letter code: MTDSTLRHITVLLDEAVEGLAVRADGCYIDGTFGRGGHSRLILHKLGPGGRLLGFDKDPLAIATGEALAAEDGRFVVVQRSFAELGDEAVVRGISGQVSGVLLDLGVSSPQLDDPERGFSFLNDGPLDMRMNPDVGVSAADWIATAEEDEIARVLKDYGEERFAKRMARAVVQRREQQPFTRTADLAKVLTEANPAWEKGKNPATRAFQGIRIYVNNELGDLERGLDAALEALEVGGRLVVISFHSLEDRIVKQFMKRQAKGEADKLPRDLPIIPKAFEPRLKLIGKPVYAGDAELKANPRSRSAVMRIAEKLR.

S-adenosyl-L-methionine is bound by residues 36–38 (GGH), Asp-56, Phe-82, Asp-104, and Gln-111.

This sequence belongs to the methyltransferase superfamily. RsmH family.

The protein resides in the cytoplasm. The enzyme catalyses cytidine(1402) in 16S rRNA + S-adenosyl-L-methionine = N(4)-methylcytidine(1402) in 16S rRNA + S-adenosyl-L-homocysteine + H(+). Its function is as follows. Specifically methylates the N4 position of cytidine in position 1402 (C1402) of 16S rRNA. This is Ribosomal RNA small subunit methyltransferase H from Ectopseudomonas mendocina (strain ymp) (Pseudomonas mendocina).